The following is a 63-amino-acid chain: Large ribosomal subunit protein uL29 (63 aa).

Belongs to the universal ribosomal protein uL29 family.

The polypeptide is Large ribosomal subunit protein uL29 (Flavobacterium psychrophilum (strain ATCC 49511 / DSM 21280 / CIP 103535 / JIP02/86)).